An 896-amino-acid polypeptide reads, in one-letter code: Histone-lysine N-methyltransferase CLF (896 aa).

2 disordered regions span residues 344–419 and 459–514; these read DNLK…NRRI and SGIK…DGCD. A compositionally biased stretch (low complexity) spans 358 to 390; sequence GSSGQKTKSQQSESSSTARVSSESSESEVQLLS. Composition is skewed to polar residues over residues 391–400, 465–476, and 485–498; these read NKSPQHSPGL, VVSSQCNSPSTR, and QMEN…AQSD. Over residues 504 to 514 the composition is skewed to basic and acidic residues; the sequence is NNEHSATDGCD. Positions 633-732 constitute a CXC domain; that stretch reads RKRITERKDQ…TLGVPNQRGD (100 aa). Residues 747–862 enclose the SET domain; it reads QRVLLGRSDV…AGEELFYDYR (116 aa). Position 861 (tyrosine 861) interacts with S-adenosyl-L-methionine. Basic and acidic residues predominate over residues 869–884; sequence PAWARKPEGPGAKDDA. The interval 869–896 is disordered; it reads PAWARKPEGPGAKDDAQPSTGRAKKLAH.

It belongs to the class V-like SAM-binding methyltransferase superfamily. Histone-lysine methyltransferase family. EZ subfamily. Interacts with FIE1. Component of the polycomb repressive complex 2 (PRC2), composed of the core PRC2 components FIE2, EMF2B and EZ1. PRC2 methylates 'Lys-27' residues of histone H3 (H3K27me3), leading to transcriptional repression of the affected target gene. As to expression, widely expressed. Highly expressed in young panicle.

It catalyses the reaction L-lysyl(27)-[histone H3] + 3 S-adenosyl-L-methionine = N(6),N(6),N(6)-trimethyl-L-lysyl(27)-[histone H3] + 3 S-adenosyl-L-homocysteine + 3 H(+). Functionally, polycomb group (PcG) protein. Catalytic subunit of some PcG multiprotein complex, which methylates 'Lys-27' of histone H3, leading to transcriptional repression of the affected target genes. PcG proteins act by forming multiprotein complexes, which are required to maintain the transcriptionally repressive state of homeotic genes throughout development. PcG proteins are not required to initiate repression, but to maintain it during later stages of development. Involved in the regulation of flowering. Represses flowering under long day (LD) conditions. Regulates the trimethylation on histone H3 'Lys-27' (H3K27me3) of the flowering regulators MADS14, MADS15, RFT1, EHD1, HD3A and LF. This chain is Histone-lysine N-methyltransferase CLF, found in Oryza sativa subsp. japonica (Rice).